The primary structure comprises 515 residues: 2,3-bisphosphoglycerate-independent phosphoglycerate mutase (515 aa).

Residues D14 and S64 each coordinate Mn(2+). Catalysis depends on S64, which acts as the Phosphoserine intermediate. Substrate contacts are provided by residues H125, 155–156 (RD), R187, R193, 263–266 (RADR), and K337. Mn(2+)-binding residues include D404, H408, D445, H446, and H464.

Belongs to the BPG-independent phosphoglycerate mutase family. As to quaternary structure, monomer. Mn(2+) is required as a cofactor.

It carries out the reaction (2R)-2-phosphoglycerate = (2R)-3-phosphoglycerate. It functions in the pathway carbohydrate degradation; glycolysis; pyruvate from D-glyceraldehyde 3-phosphate: step 3/5. Its function is as follows. Catalyzes the interconversion of 2-phosphoglycerate and 3-phosphoglycerate. In Yersinia pseudotuberculosis serotype O:1b (strain IP 31758), this protein is 2,3-bisphosphoglycerate-independent phosphoglycerate mutase.